The chain runs to 384 residues: Putative F-box/kelch-repeat protein At3g27910 (384 aa).

The F-box domain maps to 27–79; that stretch reads SPTSLPLPDEIIVNCFAYIPRCDYPSLSLVSKTFNRLITSIELNIVRSLFQRT. 4 Kelch repeats span residues 138 to 184, 185 to 235, 237 to 274, and 275 to 323; these read KIYV…IVDG, KIYV…VMNK, IYIM…VIDN, and MLYT…MANH.

The sequence is that of Putative F-box/kelch-repeat protein At3g27910 from Arabidopsis thaliana (Mouse-ear cress).